Consider the following 418-residue polypeptide: Gamma-glutamyl phosphate reductase (418 aa).

This sequence belongs to the gamma-glutamyl phosphate reductase family.

The protein resides in the cytoplasm. The catalysed reaction is L-glutamate 5-semialdehyde + phosphate + NADP(+) = L-glutamyl 5-phosphate + NADPH + H(+). It participates in amino-acid biosynthesis; L-proline biosynthesis; L-glutamate 5-semialdehyde from L-glutamate: step 2/2. Functionally, catalyzes the NADPH-dependent reduction of L-glutamate 5-phosphate into L-glutamate 5-semialdehyde and phosphate. The product spontaneously undergoes cyclization to form 1-pyrroline-5-carboxylate. This chain is Gamma-glutamyl phosphate reductase, found in Histophilus somni (strain 2336) (Haemophilus somnus).